The sequence spans 340 residues: KRR1 small subunit processome component homolog (340 aa).

One can recognise a KH domain in the interval 124-192; it reads DIIKIGNLVH…VRDIVLETMN (69 aa). Residues 228-244 show a composition bias toward basic residues; sequence KNKNISKRKQPKSKKPK. 2 disordered regions span residues 228 to 259 and 271 to 324; these read KNKNISKRKQPKSKKPKKEYTPFPPAQPESKI and NQEQ…KVDV. Residues 269-302 adopt a coiled-coil conformation; it reads FLNQEQKQAKRNQERSAKQADAAKKQDERRNKDF. Basic and acidic residues-rich tracts occupy residues 275-301 and 309-324; these read KQAKRNQERSAKQADAAKKQDERRNKD and APSRKRQAEDSSKVDV.

This sequence belongs to the KRR1 family. In terms of assembly, monomer. Component of the ribosomal small subunit (SSU) processome.

It localises to the nucleus. The protein resides in the nucleolus. In terms of biological role, required for 40S ribosome biogenesis. Involved in nucleolar processing of pre-18S ribosomal RNA and ribosome assembly. Binds to RNA. Required for female germline development, cell viability during eye development and for survival of dividing cells and epithelial cells during early wing disk development. The polypeptide is KRR1 small subunit processome component homolog (Drosophila persimilis (Fruit fly)).